The following is a 290-amino-acid chain: 2-hydroxy-6-oxo-6-(2'-aminophenyl)hexa-2,4-dienoic acid hydrolase (290 aa).

Active-site residues include S114, D233, and H261.

The protein belongs to the DmpD/TodF/XylF esterase family. In terms of assembly, homodimer.

It carries out the reaction (2E,4E)-6-(2-aminophenyl)-2-hydroxy-6-oxohexa-2,4-dienoate + H2O = (2E)-2-hydroxypenta-2,4-dienoate + anthranilate + H(+). It participates in xenobiotic degradation; carbazole degradation. Involved in the degradation of carbazole, a toxic N-heterocyclic aromatic compound containing dibenzopyrrole system. Catalyzes the hydrolytic cleavage of a carbon-carbon bond of 2-hydroxy-6-oxo-6-(2'-aminophenyl)hexa-2,4-dienoic acid (HOPDA) to yield anthranilate. CarC is specific for 2-hydroxy-6-oxo-6-phenylhexa-2,4-dienoic acid (6-phenyl-HODA), and has little activity toward 2-hydroxy-6-oxohepta-2,4-dienoic acid and 2-hydroxymuconic semialdehyde. The effect of the presence of an amino group or hydroxyl group at the 2'-position of phenyl moiety of 6-phenyl-HODA on the enzyme activity is found to be small. The protein is 2-hydroxy-6-oxo-6-(2'-aminophenyl)hexa-2,4-dienoic acid hydrolase (carC) of Metapseudomonas resinovorans (Pseudomonas resinovorans).